The sequence spans 82 residues: Cortexin-1 (82 aa).

The interval 1-20 (MSAPWTLSPEPLPPSTGPPV) is disordered. A helical transmembrane segment spans residues 30–50 (TVFAFVLCLLVVLVLLMVRCV).

Belongs to the cortexin family. As to expression, neuron specific.

It is found in the membrane. In terms of biological role, may mediate extracellular or intracellular signaling of cortical neurons during forebrain development. The chain is Cortexin-1 (Ctxn1) from Rattus norvegicus (Rat).